The chain runs to 189 residues: Elongation factor P (189 aa).

Lys34 is modified (N6-(3,6-diaminohexanoyl)-5-hydroxylysine).

Belongs to the elongation factor P family. Post-translationally, may be beta-lysylated on the epsilon-amino group of Lys-34 by the combined action of EpmA and EpmB, and then hydroxylated on the C5 position of the same residue by EpmC (if this protein is present). Lysylation is critical for the stimulatory effect of EF-P on peptide-bond formation. The lysylation moiety may extend toward the peptidyltransferase center and stabilize the terminal 3-CCA end of the tRNA. Hydroxylation of the C5 position on Lys-34 may allow additional potential stabilizing hydrogen-bond interactions with the P-tRNA.

The protein localises to the cytoplasm. It functions in the pathway protein biosynthesis; polypeptide chain elongation. Functionally, involved in peptide bond synthesis. Alleviates ribosome stalling that occurs when 3 or more consecutive Pro residues or the sequence PPG is present in a protein, possibly by augmenting the peptidyl transferase activity of the ribosome. Modification of Lys-34 is required for alleviation. In Nitrosococcus oceani (strain ATCC 19707 / BCRC 17464 / JCM 30415 / NCIMB 11848 / C-107), this protein is Elongation factor P.